Reading from the N-terminus, the 192-residue chain is Inner membrane protein YohD (192 aa).

The Periplasmic portion of the chain corresponds to M1 to K40. Residues F41–L61 traverse the membrane as a helical segment. At C62–K121 the chain is on the cytoplasmic side. The helical transmembrane segment at I122–G142 threads the bilayer. The Periplasmic portion of the chain corresponds to Y143 to H159. A helical transmembrane segment spans residues L160–L180. Over K181 to A192 the chain is Cytoplasmic.

Belongs to the DedA family.

It localises to the cell inner membrane. This chain is Inner membrane protein YohD (yohD), found in Escherichia coli (strain K12).